The chain runs to 214 residues: 3-demethoxyubiquinol 3-hydroxylase (214 aa).

Positions 63, 93, 96, 145, 177, and 180 each coordinate Fe cation.

This sequence belongs to the COQ7 family. The cofactor is Fe cation.

It localises to the cell membrane. The enzyme catalyses a 5-methoxy-2-methyl-3-(all-trans-polyprenyl)benzene-1,4-diol + AH2 + O2 = a 3-demethylubiquinol + A + H2O. It participates in cofactor biosynthesis; ubiquinone biosynthesis. In terms of biological role, catalyzes the hydroxylation of 2-nonaprenyl-3-methyl-6-methoxy-1,4-benzoquinol during ubiquinone biosynthesis. This Psychrobacter cryohalolentis (strain ATCC BAA-1226 / DSM 17306 / VKM B-2378 / K5) protein is 3-demethoxyubiquinol 3-hydroxylase.